A 441-amino-acid chain; its full sequence is Maltose-6'-phosphate glucosidase MalH (441 aa).

4–70 is an NAD(+) binding site; the sequence is FSVVIAGGGS…PEIEFLATTN (67 aa). Substrate-binding residues include R93 and N147. C169 is a binding site for Mn(2+). The active-site Proton donor is D170. H200 lines the Mn(2+) pocket. Y264 functions as the Proton acceptor in the catalytic mechanism. R284 lines the substrate pocket.

Homotetramer. NAD(+) serves as cofactor. It depends on Mn(2+) as a cofactor.

It carries out the reaction alpha-maltose 6'-phosphate + H2O = D-glucose 6-phosphate + D-glucose. Catalyzes the hydrolysis of O-alpha-linked disaccharide 6-phosphates, including maltose-6'P and all five phosphorylated isomers of sucrose, but not sucrose-6P. Does not hydrolyze beta-linked disaccharide 6-phosphates such as cellobiose-6'P and gentiobiose-6'P. Is involved in the dissimilation of maltose and related O-alpha-linked glucosides produced via the phosphoenolpyruvate-dependent sugar phosphotransferase system (PEP-PTS). In Clostridium acetobutylicum (strain ATCC 824 / DSM 792 / JCM 1419 / IAM 19013 / LMG 5710 / NBRC 13948 / NRRL B-527 / VKM B-1787 / 2291 / W), this protein is Maltose-6'-phosphate glucosidase MalH (malH).